The following is a 3961-amino-acid chain: Hybrid PKS-NRPS synthetase phm1 (3961 aa).

The region spanning 4 to 436 is the Ketosynthase family 3 (KS3) domain; it reads SEPIAIIGSA…GTNAHAIVEA (433 aa). Active-site for beta-ketoacyl synthase activity residues include Cys-178, His-317, and His-356. A malonyl-CoA:ACP transacylase (MAT) domain region spans residues 541-867; sequence VFTGQGAQWP…RSKNDILELS (327 aa). The interval 933-1068 is N-terminal hotdog fold; the sequence is HPILGKRCLE…GTVTVTLAEP (136 aa). Positions 933-1234 are dehydratase (DH) domain; the sequence is HPILGKRCLE…LELVPFTAAR (302 aa). The PKS/mFAS DH domain maps to 933 to 1236; that stretch reads HPILGKRCLE…LVPFTAARPE (304 aa). His-966 acts as the Proton acceptor; for dehydratase activity in catalysis. A C-terminal hotdog fold region spans residues 1083–1236; sequence MTEIEVDRFY…LVPFTAARPE (154 aa). Residue Asp-1143 is the Proton donor; for dehydratase activity of the active site. Residues 1376 to 1569 are methyltransferase (MT) domain; it reads FDFYDQGLGL…GFGGIDTSTP (194 aa). Residues 2106–2277 are ketoreductase (KR) domain; it reads TYLLIGMSGQ…GVPGSAISIS (172 aa). In terms of domain architecture, Carrier 1 spans 2386-2464; sequence QAATIIKDGF…ELLQEAMDRT (79 aa). Ser-2424 is modified (O-(pantetheine 4'-phosphoryl)serine). A disordered region spans residues 2482-2527; it reads PVTNTATPPPEVQVTGSASDSSRSLTPDGLSTSRPSTPVRTPMTEI. The segment covering 2495–2520 has biased composition (polar residues); sequence VTGSASDSSRSLTPDGLSTSRPSTPV. Residues 2553–2993 are condensation (C) domain; that stretch reads PMSYGQARFW…DLPRWAGADV (441 aa). The adenylation (A) (KR) domain stretch occupies residues 3019–3424; sequence QMIGTYASKP…DGALFVHGRI (406 aa). One can recognise a Carrier 2 domain in the interval 3542-3616; the sequence is ANMEGRVAAL…GMARHVRAAF (75 aa). Ser-3576 is subject to O-(pantetheine 4'-phosphoryl)serine. Residues 3725–3871 form a reductase (RED) domain region; it reads ITDIVFHCAA…VRPVSDVATT (147 aa).

It in the C-terminal section; belongs to the NRP synthetase family.

It participates in secondary metabolite biosynthesis. Hybrid PKS-NRPS synthetase; part of the gene cluster that mediates the biosynthesis of the trans-fused decalin-containing tetramic acid phomasetin, the stereochemical opposite of the HIV-1 integrase inhibitor equisetin. The PKS module of phm1 together with the enoylreductase phm4 catalyze the formation of the polyketide unit which is then conjugated to L-serine by the condensation domain of the phm1 NRPS module. Activity of the Dieckmann cyclase domain (RED) of phm1 results in release of the Dieckmann product intermediate. The Diels-Alderase phm7 then uses the Dieckmann product of phm1 as substrate and catalyzes the Diels-Alder cycloaddition to form the decalin ring of N-desmethylphomasetin. N-desmethylphomasetin is further methylated to phomasetin by the methyltransferase phm5. This Pyrenochaetopsis sp protein is Hybrid PKS-NRPS synthetase phm1.